Here is a 473-residue protein sequence, read N- to C-terminus: Photosystem II CP43 reaction center protein (473 aa).

The propeptide occupies 1 to 14 (MKTLYSLRRFSHVE). T15 is modified (N-acetylthreonine). A Phosphothreonine modification is found at T15. Transmembrane regions (helical) follow at residues 69 to 93 (LFEVAHFGPEKPMYEQGLILLPHLA), 134 to 155 (LLGPEIIEESFPLFRYVWKDRN), 178 to 200 (KALYFGGVYDTWAPGGGDVRKIT), 255 to 275 (KPFAWARRALVWSGEAYLSYS), and 291 to 312 (WFNNTAYPSEFYGPTGPEASQA). E367 is a binding site for [CaMn4O5] cluster. Residues 447-471 (RARAAAAGFEKGIDRDFEPVLSMTP) traverse the membrane as a helical segment.

Belongs to the PsbB/PsbC family. PsbC subfamily. In terms of assembly, PSII is composed of 1 copy each of membrane proteins PsbA, PsbB, PsbC, PsbD, PsbE, PsbF, PsbH, PsbI, PsbJ, PsbK, PsbL, PsbM, PsbT, PsbX, PsbY, PsbZ, Psb30/Ycf12, at least 3 peripheral proteins of the oxygen-evolving complex and a large number of cofactors. It forms dimeric complexes. It depends on Binds multiple chlorophylls and provides some of the ligands for the Ca-4Mn-5O cluster of the oxygen-evolving complex. It may also provide a ligand for a Cl- that is required for oxygen evolution. PSII binds additional chlorophylls, carotenoids and specific lipids. as a cofactor.

It is found in the plastid membrane. One of the components of the core complex of photosystem II (PSII). It binds chlorophyll and helps catalyze the primary light-induced photochemical processes of PSII. PSII is a light-driven water:plastoquinone oxidoreductase, using light energy to abstract electrons from H(2)O, generating O(2) and a proton gradient subsequently used for ATP formation. The polypeptide is Photosystem II CP43 reaction center protein (Cuscuta obtusiflora (Peruvian dodder)).